Consider the following 143-residue polypeptide: MELNSIQPADGAKHYKRRVGRGIGSGLGKTSGRGHKGQKSRSGGFHKVGFEGGQMPLQRRLPKRGFKSLATPYKAEVRLSDLEALPVTEIDILALKQAGVIGELARVVRVILSGSITKKVTVKGLIATKGAKAAIEAAGGSVA.

The tract at residues 1–52 is disordered; sequence MELNSIQPADGAKHYKRRVGRGIGSGLGKTSGRGHKGQKSRSGGFHKVGFEG. Over residues 21–31 the composition is skewed to gly residues; the sequence is RGIGSGLGKTS.

It belongs to the universal ribosomal protein uL15 family. As to quaternary structure, part of the 50S ribosomal subunit.

Its function is as follows. Binds to the 23S rRNA. The sequence is that of Large ribosomal subunit protein uL15 from Janthinobacterium sp. (strain Marseille) (Minibacterium massiliensis).